The chain runs to 398 residues: Phosphoglycerate kinase (398 aa).

Substrate-binding positions include aspartate 20–asparagine 22, arginine 35, histidine 58–arginine 61, arginine 118, and arginine 155. ATP-binding positions include lysine 206, glycine 295, glutamate 326, and glycine 354–serine 357.

It belongs to the phosphoglycerate kinase family. In terms of assembly, monomer.

It localises to the cytoplasm. It carries out the reaction (2R)-3-phosphoglycerate + ATP = (2R)-3-phospho-glyceroyl phosphate + ADP. It functions in the pathway carbohydrate degradation; glycolysis; pyruvate from D-glyceraldehyde 3-phosphate: step 2/5. The polypeptide is Phosphoglycerate kinase (Onion yellows phytoplasma (strain OY-M)).